The following is an 85-amino-acid chain: Small ribosomal subunit protein uS15 (85 aa).

Belongs to the universal ribosomal protein uS15 family. Part of the 30S ribosomal subunit. Forms a bridge to the 50S subunit in the 70S ribosome, contacting the 23S rRNA.

Its function is as follows. One of the primary rRNA binding proteins, it binds directly to 16S rRNA where it helps nucleate assembly of the platform of the 30S subunit by binding and bridging several RNA helices of the 16S rRNA. Functionally, forms an intersubunit bridge (bridge B4) with the 23S rRNA of the 50S subunit in the ribosome. This is Small ribosomal subunit protein uS15 from Fusobacterium nucleatum subsp. nucleatum (strain ATCC 25586 / DSM 15643 / BCRC 10681 / CIP 101130 / JCM 8532 / KCTC 2640 / LMG 13131 / VPI 4355).